The sequence spans 355 residues: Type II restriction enzyme CfrBI (355 aa).

It catalyses the reaction Endonucleolytic cleavage of DNA to give specific double-stranded fragments with terminal 5'-phosphates.. Its function is as follows. A P subtype restriction enzyme that recognizes the double-stranded sequence 5'-CCWWGG-3' and cleaves after C-1. The polypeptide is Type II restriction enzyme CfrBI (Citrobacter freundii).